The sequence spans 556 residues: Arginine--tRNA ligase (556 aa).

Positions 132-142 (ANPTGPIHLGG) match the 'HIGH' region motif.

The protein belongs to the class-I aminoacyl-tRNA synthetase family. Monomer.

Its subcellular location is the cytoplasm. It carries out the reaction tRNA(Arg) + L-arginine + ATP = L-arginyl-tRNA(Arg) + AMP + diphosphate. This Kocuria rhizophila (strain ATCC 9341 / DSM 348 / NBRC 103217 / DC2201) protein is Arginine--tRNA ligase.